Consider the following 203-residue polypeptide: Thymidylate kinase (203 aa).

ATP is bound at residue 10 to 17 (GIDGAGKS).

It belongs to the thymidylate kinase family.

The enzyme catalyses dTMP + ATP = dTDP + ADP. Phosphorylation of dTMP to form dTDP in both de novo and salvage pathways of dTTP synthesis. This chain is Thymidylate kinase, found in Cupriavidus pinatubonensis (strain JMP 134 / LMG 1197) (Cupriavidus necator (strain JMP 134)).